The following is a 245-amino-acid chain: Uracil-DNA glycosylase (245 aa).

The active-site Proton acceptor is the Asp82.

Belongs to the uracil-DNA glycosylase (UDG) superfamily. UNG family.

It localises to the cytoplasm. The catalysed reaction is Hydrolyzes single-stranded DNA or mismatched double-stranded DNA and polynucleotides, releasing free uracil.. In terms of biological role, excises uracil residues from the DNA which can arise as a result of misincorporation of dUMP residues by DNA polymerase or due to deamination of cytosine. This Deinococcus geothermalis (strain DSM 11300 / CIP 105573 / AG-3a) protein is Uracil-DNA glycosylase.